A 456-amino-acid chain; its full sequence is MTOR-associated protein MEAK7 (456 aa).

Residue glycine 2 is the site of N-myristoyl glycine attachment. The TLDc domain occupies serine 244–glycine 412.

As to quaternary structure, interacts (via C-terminal domain) with MTOR and MLST8; the interaction with MTOR increases upon nutrient stimulation.

It localises to the membrane. The protein localises to the cytoplasm. The protein resides in the lysosome. Activates an alternative mTOR signaling through RPS6KB2 activation and EIF4EBP1 repression to regulate cell proliferation and migration. Recruits MTOR at the lysosome, essential for MTOR signaling at the lysosome. The polypeptide is MTOR-associated protein MEAK7 (Homo sapiens (Human)).